Consider the following 109-residue polypeptide: MFGKGGLGNLMKQAQQMQDKMQKMQEEIASLEVTGESGAGLVKVTINGAHNCRRVEIDPSLMEDDKEMLEDLIAAAFNDAARRIEETQKEKMAGISSGMQLPPGFKMPF.

Disordered regions lie at residues 1–23 (MFGK…KMQK) and 89–109 (KEKM…KMPF).

This sequence belongs to the YbaB/EbfC family. As to quaternary structure, homodimer.

The protein localises to the cytoplasm. The protein resides in the nucleoid. In terms of biological role, binds to DNA and alters its conformation. May be involved in regulation of gene expression, nucleoid organization and DNA protection. The chain is Nucleoid-associated protein plu3840 from Photorhabdus laumondii subsp. laumondii (strain DSM 15139 / CIP 105565 / TT01) (Photorhabdus luminescens subsp. laumondii).